The primary structure comprises 412 residues: Phosphoglycerate kinase (412 aa).

Positions 20, 21, 22, 23, 35, 36, 59, 60, 62, 63, 118, 119, 166, and 167 each coordinate (2R)-3-phosphoglycerate. ADP is bound at residue Gly210. Residue Gly210 participates in CDP binding. Positions 211 and 212 each coordinate AMP. Ala211 serves as a coordination point for ATP. Residue Ala211 participates in Mg(2+) binding. Residues Ala214 and Asp215 each coordinate Mg(2+). Asp215 contacts CDP. AMP is bound at residue Lys216. An ATP-binding site is contributed by Lys216. Gly234 contributes to the ADP binding site. Gly234 is a binding site for CDP. Positions 235 and 308 each coordinate AMP. Positions 235 and 308 each coordinate ATP. CDP-binding residues include Gly333 and Phe338. Residue Phe338 coordinates ADP. An AMP-binding site is contributed by Glu339. Residues Glu339, Asp370, and Thr371 each contribute to the ATP site. Mg(2+) is bound at residue Asp370.

It belongs to the phosphoglycerate kinase family. As to quaternary structure, monomer. It depends on Mg(2+) as a cofactor.

It is found in the cytoplasm. It catalyses the reaction (2R)-3-phosphoglycerate + ATP = (2R)-3-phospho-glyceroyl phosphate + ADP. Its pathway is carbohydrate degradation; glycolysis; pyruvate from D-glyceraldehyde 3-phosphate: step 2/5. Its function is as follows. Catalyzes one of the two ATP producing reactions in the glycolytic pathway via the reversible conversion of 1,3-diphosphoglycerate to 3-phosphoglycerate. In addition to its role as a glycolytic enzyme, it seems that PGK-1 acts as a polymerase alpha cofactor protein (primer recognition protein). May play a role in sperm motility. This Aplysia californica (California sea hare) protein is Phosphoglycerate kinase (PGK).